Consider the following 268-residue polypeptide: Embryonic abundant protein VF30.1 (268 aa).

The signal sequence occupies residues Met-1–Gly-25. The region spanning Leu-68–Asn-259 is the BURP domain. An N-linked (GlcNAc...) asparagine glycan is attached at Asn-259.

Seed.

The protein resides in the secreted. The sequence is that of Embryonic abundant protein VF30.1 from Vicia faba (Broad bean).